The sequence spans 572 residues: Transcription factor E3 (572 aa).

Residue S47 is modified to Phosphoserine; by MTOR. Low complexity predominate over residues T87–Q125. The segment at T87–S152 is disordered. Over residues E126–Q135 the composition is skewed to basic and acidic residues. Position 187 is an asymmetric dimethylarginine (R187). A disordered region spans residues L210–A248. The strong transcription activation domain stretch occupies residues E259 to L270. S320 carries the phosphoserine; by MTOR modification. A Glycyl lysine isopeptide (Lys-Gly) (interchain with G-Cter in SUMO2) cross-link involves residue K338. Positions Q345–L398 constitute a bHLH domain. Positions R355–R358 match the Nuclear localization signal motif. Positions L408 to L429 are leucine-zipper. 2 disordered regions span residues P439–S495 and V530–S572. The span at L446–S457 shows a compositional bias: low complexity. A phosphoserine mark is found at S539, S545, S551, S553, S557, and S565. Positions A543–S572 are enriched in low complexity.

It belongs to the MiT/TFE family. Homodimer and heterodimer; with TFEB or MITF. Interacts with RRAGC/RagC GDP-bound and RRAGD/RagD GDP-bound; promoting its recruitment to lysosomal membrane in the presence of nutrients. Interacts with TSC22D1; the interaction is enhanced in the presence of TGF-beta. In terms of processing, sumoylated; does not affect dimerization with MITF. Phosphorylation ar Ser-47 and Ser-320 by MTOR via non-canonical mTORC1 pathway regulates its stability and subcellular location, respectively. When nutrients are present, phosphorylation by MTOR at Ser-47 promotes ubiquitination by the SCF(BTRC) complex, followed by degradation. When nutrients are present, phosphorylation by MTOR at Ser-320 also promotes association with 14-3-3/YWHA adapters and retention in the cytosol. Phosphorylation at Ser-47 plays a more critical role than phosphorylation at Ser-320 for TFE3 inactivation. Inhibition of mTORC1, starvation and lysosomal disruption, promotes dephosphorylation and transcription factor activity. Post-translationally, ubiquitinated by the SCF(BTRC) and SCF(FBXW11) complexes following phosphorylation at Ser-47 by MTOR, leading to its degradation by the proteasome. As to expression, widely expressed.

Its subcellular location is the cytoplasm. The protein localises to the cytosol. It is found in the nucleus. It localises to the lysosome membrane. In terms of biological role, transcription factor that acts as a master regulator of lysosomal biogenesis and immune response. Specifically recognizes and binds E-box sequences (5'-CANNTG-3'); efficient DNA-binding requires dimerization with itself or with another MiT/TFE family member such as TFEB or MITF. Involved in the cellular response to amino acid availability by acting downstream of MTOR: in the presence of nutrients, TFE3 phosphorylation by MTOR promotes its inactivation. Upon starvation or lysosomal stress, inhibition of MTOR induces TFE3 dephosphorylation, resulting in transcription factor activity. Specifically recognizes and binds the CLEAR-box sequence (5'-GTCACGTGAC-3') present in the regulatory region of many lysosomal genes, leading to activate their expression, thereby playing a central role in expression of lysosomal genes. Maintains the pluripotent state of embryonic stem cells by promoting the expression of genes such as ESRRB; mTOR-dependent TFE3 cytosolic retention and inactivation promotes exit from pluripotency. Required to maintain the naive pluripotent state of hematopoietic stem cell; mTOR-dependent cytoplasmic retention of TFE3 promotes the exit of hematopoietic stem cell from pluripotency. TFE3 activity is also involved in the inhibition of neuronal progenitor differentiation. Acts as a positive regulator of browning of adipose tissue by promoting expression of target genes; mTOR-dependent phosphorylation promotes cytoplasmic retention of TFE3 and inhibits browning of adipose tissue. In association with TFEB, activates the expression of CD40L in T-cells, thereby playing a role in T-cell-dependent antibody responses in activated CD4(+) T-cells and thymus-dependent humoral immunity. Specifically recognizes the MUE3 box, a subset of E-boxes, present in the immunoglobulin enhancer. It also binds very well to a USF/MLTF site. Promotes TGF-beta-induced transcription of COL1A2; via its interaction with TSC22D1 at E-boxes in the gene proximal promoter. May regulate lysosomal positioning in response to nutrient deprivation by promoting the expression of PIP4P1. The polypeptide is Transcription factor E3 (Mus musculus (Mouse)).